The chain runs to 94 residues: DNA-directed RNA polymerase subunit Rpo11 (94 aa).

It belongs to the archaeal Rpo11/eukaryotic RPB11/RPC19 RNA polymerase subunit family. Part of the RNA polymerase complex.

It is found in the cytoplasm. It carries out the reaction RNA(n) + a ribonucleoside 5'-triphosphate = RNA(n+1) + diphosphate. DNA-dependent RNA polymerase (RNAP) catalyzes the transcription of DNA into RNA using the four ribonucleoside triphosphates as substrates. The polypeptide is DNA-directed RNA polymerase subunit Rpo11 (Thermococcus kodakarensis (strain ATCC BAA-918 / JCM 12380 / KOD1) (Pyrococcus kodakaraensis (strain KOD1))).